The sequence spans 838 residues: MSEYLAQTPCKFTIWSSEIDLIRTNLLVNAHPLSTVGRLLQYIHYQIYKQLRAIYQPEEQCTNSEIPHTPLNSINTYFLSYEGRELSATCLLKDITSSSHPDSNHFIRLQLEKRTSPSGSAFDLEYDMEGEFNSMNIQFEINTLSSQRIFNSMEPNLPIGTTLARLEKLALERIKDFEKSAGNLCGIKEDHSVSDLQGFIIKGKQTPMFLNYGSDSDYYKDLNLVDLIGIDFAPAHNSFFTFLFKMNHEQNSHIANDEERFVLEFISDATLSITQMNVKPDTTVKQVKDFICSVYTHSLNLRRNDIKLIYKGQLLHENNFAGNSSKISEYIKEPHEVKVHVQINQEYTESGPGFWNEVFNNPNIFQFMPPDTRSQSPVSFAPTQGRSPAAIRGEERGIPYVTESGNDIVPTDELYRKCIINGDEVVFIPVSELNPQSSYLSVIKGDYGEIKIPISSNDYRINGDNILLSPSAIEQLESALNFKIERPRDSTLLHPSGEHVRAADNTSSANDNNTVENDESAWNRRVVRPLRNSFPLLLVLIRTFYLIGYNSLVPFFIILEFGSFLPWKYIILLSLLFIFRTVWNTQEVWNLWRDYLHLNEIDEVKFSQIKEFINSNSLTLNFYKKCKDTQSAIDLLMIPNLHEQRLSVYSKYDIEYDTNTPDVGQLNLLFIKVLSGEIPKDALDELFKEFFELYETTRNMNTLYPQDSLNELLLMIWKESQKKDINTLPKYRRWFQTLCSQIAEHNVLDVVLRYIIPDPVNDRVITAVIKNFVLFWVTLLPYVKEKLDDIVAQRARDREQPAPSAQQQENEDEALIIPDEEEPTATGAQPHLYIPDED.

At 1–536 (MSEYLAQTPC…VRPLRNSFPL (536 aa)) the chain is on the cytoplasmic side. The segment at 31–240 (HPLSTVGRLL…DFAPAHNSFF (210 aa)) is required for ERAD-L function. Residues 259 to 318 (ERFVLEFISDATLSITQMNVKPDTTVKQVKDFICSVYTHSLNLRRNDIKLIYKGQLLHEN) form the Ubiquitin-like domain. The segment at 319-418 (NFAGNSSKIS…VPTDELYRKC (100 aa)) is important for HRD1 oligomer formation. The tract at residues 345-535 (QEYTESGPGF…VVRPLRNSFP (191 aa)) is interaction with HRD1. S374, S376, and S379 each carry phosphoserine. Residues 437–490 (SSYLSVIKGDYGEIKIPISSNDYRINGDNILLSPSAIEQLESALNFKIERPRDS) form a required for ERAD-L function and HRD1 oligomer formation region. The chain crosses the membrane as a helical span at residues 537-559 (LLVLIRTFYLIGYNSLVPFFIIL). Topologically, residues 560 to 563 (EFGS) are extracellular. A helical transmembrane segment spans residues 564 to 583 (FLPWKYIILLSLLFIFRTVW). Residues 584–838 (NTQEVWNLWR…QPHLYIPDED (255 aa)) are Cytoplasmic-facing. Positions 584 to 838 (NTQEVWNLWR…QPHLYIPDED (255 aa)) are interaction with DER1. Positions 795-838 (ARDREQPAPSAQQQENEDEALIIPDEEEPTATGAQPHLYIPDED) are disordered. Over residues 809 to 823 (ENEDEALIIPDEEEP) the composition is skewed to acidic residues.

Component of the HRD1 ubiquitin ligase complex which contains the E3 ligase HRD1, its cofactors HRD3, USA1 and DER1, substrate recruiting factor YOS9 and CDC48-binding protein UBX2. Within the complex, interacts directly with HRD1 (via N-terminus) and DER1 (via C-terminus) and indirectly with HRD3. In ERAD-L, HRD3 and YOS9 jointly bind misfolded glycoproteins in the endoplasmic reticulum (ER) lumen. Movement of ERAD-L substrates through the ER membrane is facilitated by HRD1 and DER1 which have lateral gates facing each other and which distort the membrane region between the lateral gates, making it much thinner than a normal phospholipid bilayer. Substrates insert into the membrane as a hairpin loop with one strand interacting with DER1 and the other with HRD1. The HRD1 complex interacts with the heterotrimeric CDC48-NPL4-UFD1 ATPase complex which is recruited by UBX2 via its interaction with CDC48 and which moves ubiquitinated substrates to the cytosol for targeting to the proteasome.

The protein localises to the endoplasmic reticulum membrane. Scaffold protein of the endoplasmic reticulum-associated degradation (ERAD) (also known as endoplasmic reticulum quality control, ERQC) pathway involved in ubiquitin-dependent degradation of misfolded endoplasmic reticulum proteins. Component of the HRD1 ubiquitin ligase complex, which is part of the ERAD-L and ERAD-M pathways responsible for the rapid degradation of soluble lumenal and membrane proteins with misfolded lumenal domains (ERAD-L), or ER-membrane proteins with misfolded transmembrane domains (ERAD-M). Has multiple functions in ERAD including recruitment of DER1 to the HRD1 ubiquitin ligase, and regulation of HRD1 activity. Involved in oligomerization of HRD1 and in HRD1 autoubiquitination and degradation. The sequence is that of U1 SNP1-associating protein 1 (USA1) from Saccharomyces cerevisiae (strain ATCC 204508 / S288c) (Baker's yeast).